Here is a 239-residue protein sequence, read N- to C-terminus: MGPVRLGTLLFILTVYGAWAGTPKEEEDDTERLPSKCEVCKLLSLELQEELSRTGRSREVLELGQVLDTGKRKRHIPYSVSETRLEEALENLCERILDYSVHAERKGSLRYAKGQSQTMATLKGLVQKGVKVDLGIPLELWDEPSVEVTFLKKQCETMLEQFEDVVGDWYFHHQEQPLQHFLCEGHVLPASETACLQETWTGKEKITDGQEKTEEEEQDQEEEEMTNTPVHSQHDPEDL.

A signal peptide spans methionine 1–alanine 20. Cystine bridges form between cysteine 37-cysteine 195, cysteine 40-cysteine 183, and cysteine 93-cysteine 155. The segment at threonine 199–leucine 239 is disordered. Positions threonine 201–lysine 212 are enriched in basic and acidic residues. Residues threonine 213–methionine 225 are compositionally biased toward acidic residues.

The protein belongs to the canopy family. As to quaternary structure, interacts with TLR4.

The protein resides in the secreted. Its function is as follows. Plays a role in the regulation of the cell surface expression of TLR4. In Bos taurus (Bovine), this protein is Protein canopy homolog 4 (CNPY4).